We begin with the raw amino-acid sequence, 393 residues long: Proteasome-activating nucleotidase (393 aa).

The stretch at 14–53 (SDEVQLVRLLEEKIKSLQIEIENLRKELNYYKAEMEKMLS) forms a coiled coil. ATP-binding positions include 178-183 (GTGKTM) and Tyr317. A docks into pockets in the proteasome alpha-ring to cause gate opening region spans residues 391 to 393 (KYS).

The protein belongs to the AAA ATPase family. As to quaternary structure, homohexamer. The hexameric complex has a two-ring architecture resembling a top hat that caps the 20S proteasome core at one or both ends. Upon ATP-binding, the C-terminus of PAN interacts with the alpha-rings of the proteasome core by binding to the intersubunit pockets.

It is found in the cytoplasm. ATPase which is responsible for recognizing, binding, unfolding and translocation of substrate proteins into the archaeal 20S proteasome core particle. Is essential for opening the gate of the 20S proteasome via an interaction with its C-terminus, thereby allowing substrate entry and access to the site of proteolysis. Thus, the C-termini of the proteasomal ATPase function like a 'key in a lock' to induce gate opening and therefore regulate proteolysis. Unfolding activity requires energy from ATP hydrolysis, whereas ATP binding alone promotes ATPase-20S proteasome association which triggers gate opening, and supports translocation of unfolded substrates. The protein is Proteasome-activating nucleotidase of Saccharolobus islandicus (strain M.16.27) (Sulfolobus islandicus).